The following is a 392-amino-acid chain: Formate-dependent phosphoribosylglycinamide formyltransferase (392 aa).

N(1)-(5-phospho-beta-D-ribosyl)glycinamide contacts are provided by residues 22–23 (EL) and Glu-82. ATP contacts are provided by residues Arg-114, Lys-155, 160–165 (SSGKGQ), 195–198 (EGEV), and Glu-203. Positions 119–308 (RLAAETLALP…EFALHVRAFL (190 aa)) constitute an ATP-grasp domain. Residues Glu-267 and Glu-279 each contribute to the Mg(2+) site. N(1)-(5-phospho-beta-D-ribosyl)glycinamide is bound by residues Asp-286, Lys-355, and 362 to 363 (RR).

The protein belongs to the PurK/PurT family. As to quaternary structure, homodimer.

The enzyme catalyses N(1)-(5-phospho-beta-D-ribosyl)glycinamide + formate + ATP = N(2)-formyl-N(1)-(5-phospho-beta-D-ribosyl)glycinamide + ADP + phosphate + H(+). Its pathway is purine metabolism; IMP biosynthesis via de novo pathway; N(2)-formyl-N(1)-(5-phospho-D-ribosyl)glycinamide from N(1)-(5-phospho-D-ribosyl)glycinamide (formate route): step 1/1. Involved in the de novo purine biosynthesis. Catalyzes the transfer of formate to 5-phospho-ribosyl-glycinamide (GAR), producing 5-phospho-ribosyl-N-formylglycinamide (FGAR). Formate is provided by PurU via hydrolysis of 10-formyl-tetrahydrofolate. In Edwardsiella ictaluri (strain 93-146), this protein is Formate-dependent phosphoribosylglycinamide formyltransferase.